Consider the following 1368-residue polypeptide: DNA-directed RNA polymerase subunit beta (1368 aa).

Belongs to the RNA polymerase beta chain family. In terms of assembly, the RNAP catalytic core consists of 2 alpha, 1 beta, 1 beta' and 1 omega subunit. When a sigma factor is associated with the core the holoenzyme is formed, which can initiate transcription.

The enzyme catalyses RNA(n) + a ribonucleoside 5'-triphosphate = RNA(n+1) + diphosphate. Its function is as follows. DNA-dependent RNA polymerase catalyzes the transcription of DNA into RNA using the four ribonucleoside triphosphates as substrates. The polypeptide is DNA-directed RNA polymerase subunit beta (Legionella pneumophila (strain Corby)).